Consider the following 979-residue polypeptide: Mast/stem cell growth factor receptor Kit (979 aa).

Positions 1–24 (MRGARGAWDLLCVLLVLLRGQTAT) are cleaved as a signal peptide. Residues 25–527 (SQPSASPGEP…QIQAHTLFTP (503 aa)) lie on the Extracellular side of the membrane. 3 Ig-like C2-type domains span residues 31–117 (PGEP…DPAK), 126–210 (FGKE…AAIK), and 217–315 (VPET…EKGF). Cystine bridges form between cysteine 58/cysteine 98, cysteine 137/cysteine 187, cysteine 152/cysteine 184, and cysteine 234/cysteine 293. Asparagine 146 carries N-linked (GlcNAc...) asparagine glycosylation. N-linked (GlcNAc...) asparagine glycosylation is found at asparagine 296, asparagine 303, asparagine 323, asparagine 355, asparagine 370, asparagine 466, and asparagine 489. 2 consecutive Ig-like C2-type domains span residues 324-417 (TTVF…TKPE) and 420-514 (TYDR…FKGN). Cysteine 431 and cysteine 494 form a disulfide bridge. The chain crosses the membrane as a helical span at residues 528-548 (LLIGFVVAAGAMGIIVMVLTY). The Cytoplasmic portion of the chain corresponds to 549-979 (KYLQKPMYEV…TQPLLVHEDA (431 aa)). 2 positions are modified to phosphotyrosine; by autocatalysis: tyrosine 550 and tyrosine 556. Residue tyrosine 571 coordinates Mg(2+). A phosphotyrosine mark is found at tyrosine 571 and tyrosine 573. An important for interaction with phosphotyrosine-binding proteins region spans residues 571–573 (YVY). The Protein kinase domain maps to 592 to 939 (LSFGKTLGAG…ISDSTKHIYS (348 aa)). ATP-binding positions include 599–606 (GAGAFGKV), lysine 626, and 674–680 (EYCCYGD). Tyrosine 706 carries the phosphotyrosine modification. Position 720 is a phosphoserine (serine 720). Tyrosine 723 and tyrosine 732 each carry phosphotyrosine; by autocatalysis. A phosphoserine; by PKC/PRKCA mark is found at serine 743 and serine 748. The active-site Proton acceptor is the aspartate 794. Residue arginine 798 participates in ATP binding. Residues asparagine 799 and aspartate 812 each contribute to the Mg(2+) site. The residue at position 823 (serine 823) is a Phosphoserine. Position 825 is a phosphotyrosine; by autocatalysis (tyrosine 825). Serine 893 bears the Phosphoserine mark. A Phosphotyrosine; by autocatalysis modification is found at tyrosine 902. Phosphotyrosine is present on tyrosine 938. Phosphoserine is present on serine 962.

This sequence belongs to the protein kinase superfamily. Tyr protein kinase family. CSF-1/PDGF receptor subfamily. In terms of assembly, monomer in the absence of bound KITLG/SCF. Homodimer in the presence of bound KITLG/SCF, forming a heterotetramer with two KITLG/SCF molecules. Interacts (via phosphorylated tyrosine residues) with the adapter proteins GRB2 and GRB7 (via SH2 domain), and SH2B2/APS. Interacts (via C-terminus) with MPDZ (via the tenth PDZ domain). Interacts (via phosphorylated tyrosine residues) with the protein phosphatases PTPN6/SHP-1 (via SH2 domain), PTPN11/SHP-2 (via SH2 domain) and PTPRU. Interacts with DOK1 and TEC. Interacts with the protein kinase FES/FPS. Interacts with PLCG1. Interacts (via phosphorylated tyrosine residues) with PIK3R1 and PIK3 catalytic subunit. Interacts (KITLG/SCF-bound) with IL1RL1. Interacts with IL1RAP (independent of stimulation with KITLG/SCF). A mast cell-specific KITLG/SCF-induced interleukin-33 signaling complex contains IL1RL1, IL1RAP, KIT and MYD88. Post-translationally, ubiquitinated by SOCS6. KIT is rapidly ubiquitinated after autophosphorylation induced by KITLG/SCF binding, leading to internalization and degradation. In terms of processing, autophosphorylated on tyrosine residues. KITLG/SCF binding promotes autophosphorylation of isoform 1 and isoform 2. Isoform 1 shows low levels of tyrosine phosphorylation in the absence of added KITLG/SCF, while isoform 2 requires stimulation by KITLG/SCF for phosphorylation (in vitro). Phosphorylation of Tyr-573 is required for interaction with PTPN6/SHP-1. Phosphorylation of Tyr-571 is required for interaction with PTPN11/SHP-2. Phosphorylated tyrosine residues are important for interaction with specific binding partners. In terms of tissue distribution, isoform 1 and isoform 2 are detected in bone marrow cells, spermatogonia and spermatocytes, but not in round spermatids, elongating spermatids and spermatozoa. Isoform 3 is detected in round spermatids, elongating spermatids and spermatozoa, but not in spermatogonia and spermatocytes (at protein level). Isoform 1 is widely expressed and detected in fetal liver and bone marrow. Isoform 3 is detected in bone marrow cells enriched in hematopoietic stem cells.

The protein localises to the cell membrane. It localises to the cytoplasm. It carries out the reaction L-tyrosyl-[protein] + ATP = O-phospho-L-tyrosyl-[protein] + ADP + H(+). Present in an inactive conformation in the absence of bound ligand. KITLG/SCF binding leads to dimerization and activation by autophosphorylation. Tyrosine-protein kinase that acts as a cell-surface receptor for the cytokine KITLG/SCF and plays an essential role in the regulation of cell survival and proliferation, hematopoiesis, stem cell maintenance, gametogenesis, mast cell development, migration and function, and in melanogenesis. In response to KITLG/SCF binding, KIT can activate several signaling pathways. Phosphorylates PIK3R1, PLCG1, SH2B2/APS and CBL. Activates the AKT1 signaling pathway by phosphorylation of PIK3R1, the regulatory subunit of phosphatidylinositol 3-kinase. Activated KIT also transmits signals via GRB2 and activation of RAS, RAF1 and the MAP kinases MAPK1/ERK2 and/or MAPK3/ERK1. Promotes activation of STAT family members STAT1, STAT3, STAT5A and STAT5B. Activation of PLCG1 leads to the production of the cellular signaling molecules diacylglycerol and inositol 1,4,5-trisphosphate. KIT signaling is modulated by protein phosphatases, and by rapid internalization and degradation of the receptor. Activated KIT promotes phosphorylation of the protein phosphatases PTPN6/SHP-1 and PTPRU, and of the transcription factors STAT1, STAT3, STAT5A and STAT5B. Promotes phosphorylation of PIK3R1, CBL, CRK (isoform Crk-II), LYN, MAPK1/ERK2 and/or MAPK3/ERK1, PLCG1, SRC and SHC1. This Mus musculus (Mouse) protein is Mast/stem cell growth factor receptor Kit (Kit).